Consider the following 319-residue polypeptide: tRNA (guanine(9)-N(1))-methyltransferase Trmt10A (319 aa).

Disordered regions lie at residues 16-87 (LSLN…KRQL) and 275-319 (AKIT…SLDS). Residues 17 to 33 (SLNNCPGTTPGTPMSKN) show a composition bias toward polar residues. Positions 35 to 42 (LKKQRKLA) match the Nuclear localization signal motif. Composition is skewed to basic and acidic residues over residues 40 to 58 (KLAEFAELRKLRREREREK), 78 to 87 (SRKELKKRQL), and 276 to 302 (KITDKKEPNHCLEQQDEKQKQEAESDK). Residues 44-67 (FAELRKLRREREREKKKQKRREAK) are a coiled coil. The SAM-dependent MTase TRM10-type domain occupies 83–274 (KKRQLADGGK…ETIPMRKGAK (192 aa)).

The protein belongs to the class IV-like SAM-binding methyltransferase superfamily. TRM10 family.

The protein localises to the nucleus. The protein resides in the nucleolus. It is found in the chromosome. The enzyme catalyses guanosine(9) in tRNA + S-adenosyl-L-methionine = N(1)-methylguanosine(9) in tRNA + S-adenosyl-L-homocysteine + H(+). In terms of biological role, S-adenosyl-L-methionine-dependent guanine N(1)-methyltransferase that catalyzes the formation of N(1)-methylguanine at position 9 (m1G9) in tRNAs. Modulates Mettl3-mediated N6-methyladenosine (m6A) methylation of mRNA 5'-UTRs and 3'-UTRs independent of its methyltransferase activity; influences mRNA stability and protein levels, in particular of Hsp70 chaperone proteins and other stress response proteins. Also regulates stability of transcripts encoding proteins involved in signaling processes and proteins involved in neurogenesis and axon guidance pathways. The sequence is that of tRNA (guanine(9)-N(1))-methyltransferase Trmt10A from Drosophila melanogaster (Fruit fly).